The sequence spans 35 residues: Somatostatin (35 aa).

An intrachain disulfide couples cysteine 24 to cysteine 35.

The protein belongs to the somatostatin family.

The protein resides in the secreted. Its function is as follows. Somatostatin inhibits the release of somatotropin. The protein is Somatostatin (sst) of Lampetra fluviatilis (European river lamprey).